Reading from the N-terminus, the 152-residue chain is MCSLPMARYYIIKDAHQKALYTRNGQLLLGDPDSDNYSPEKVCILPNRGLDRSKVPIFLGMQGGSCCLACVKTREGPLLQLEDVNIEDLYKGGEQTTRFTFFQRSLGSAFRLEAAACPGWFLCGPAEPQQPVQLTKESEPSTHTEFYFEMSR.

It belongs to the IL-1 family. As to quaternary structure, interacts with cargo receptor TMED10; the interaction mediates the translocation from the cytoplasm into the ERGIC (endoplasmic reticulum-Golgi intermediate compartment) and thereby secretion.

The protein resides in the cytoplasm. It is found in the endoplasmic reticulum-Golgi intermediate compartment. Its subcellular location is the secreted. Cytokine with immunomodulatory activity. Alone, does not induce cytokine production, but reduces IL22 and IL17A production by T-cells in response to heat-killed Candida albicans. Reduces IL36G-induced production of IL8 by peripheral blood mononuclear cells. Increases IL6 production by dendritic cells stimulated by bacterial lipopolysaccharides (LPS). Ligand for IL-36R/IL1RL2. The chain is Interleukin-1 family member 10 (Il1f10) from Mus musculus (Mouse).